An 859-amino-acid chain; its full sequence is Envelope glycoprotein (859 aa).

A propeptide spanning residues 1 to 6 is cleaved from the precursor; sequence MVSIAF. The Extracellular segment spans residues 7–614; sequence YGGIPGGIST…KDLWSHIGNW (608 aa). 13 N-linked (GlcNAc...) asparagine; by host glycosylation sites follow: asparagine 40, asparagine 112, asparagine 141, asparagine 148, asparagine 186, asparagine 214, asparagine 233, asparagine 244, asparagine 340, asparagine 368, asparagine 399, asparagine 406, and asparagine 411. The interval 446 to 466 is fusion peptide; sequence FGISAIVAAIVAATAIAASAT. N-linked (GlcNAc...) asparagine; by host glycans are attached at residues asparagine 483 and asparagine 490. The segment at 498 to 513 is immunosuppression; the sequence is LIERQIKILYAMILQT. Residues asparagine 550 and asparagine 557 are each glycosylated (N-linked (GlcNAc...) asparagine; by host). Coiled-coil stretches lie at residues 576-624 and 663-699; these read ILTT…SIIK and KKFH…YYKQ. A helical transmembrane segment spans residues 615–635; sequence IPGLGASIIKYIVMFLLIYLL. Over 636–859 the chain is Cytoplasmic; the sequence is LTSSPKILRA…TSHVSMPQYV (224 aa).

In terms of assembly, the mature envelope protein (Env) consists of a trimer of SU-TM heterodimers attached by noncovalent interactions or by a labile interchain disulfide bond. In terms of processing, specific enzymatic cleavages in vivo yield mature proteins. Envelope glycoproteins are synthesized as an inactive precursor that is N-glycosylated and processed likely by host cell furin or by a furin-like protease in the Golgi to yield the mature SU and TM proteins. The cleavage site between SU and TM requires the minimal sequence [KR]-X-[KR]-R.

Its subcellular location is the virion membrane. It is found in the host cell membrane. In terms of biological role, the surface protein (SU) attaches the virus to the host cell by binding to its receptor. This interaction triggers the refolding of the transmembrane protein (TM) and is thought to activate its fusogenic potential by unmasking its fusion peptide. Fusion occurs at the host cell plasma membrane. Functionally, the transmembrane protein (TM) acts as a class I viral fusion protein. Under the current model, the protein has at least 3 conformational states: pre-fusion native state, pre-hairpin intermediate state, and post-fusion hairpin state. During viral and target cell membrane fusion, the coiled coil regions (heptad repeats) assume a trimer-of-hairpins structure, positioning the fusion peptide in close proximity to the C-terminal region of the ectodomain. The formation of this structure appears to drive apposition and subsequent fusion of viral and target cell membranes. Membranes fusion leads to delivery of the nucleocapsid into the cytoplasm. This is Envelope glycoprotein (env) from Equus asinus (Donkey).